A 739-amino-acid polypeptide reads, in one-letter code: Putative apoptosis-inducing factor 1, mitochondrial (739 aa).

Residues 1–42 (MSIWGVRCLTQRFIRQAYILANRRLLGPVPQRSPPAYAPLRP) constitute a mitochondrion transit peptide. The segment at 257 to 564 (YLIIGGGTAA…ARRNLYVAGD (308 aa)) is FAD-dependent oxidoreductase. FAD is bound by residues 261–265 (GGGTA), R295, K300, V358, R410, D564, and 580–581 (HH). Residues 644 to 681 (VDQLSESSDSDVPETSTSSSQSSKSDAGASQDGVTCDP) form a disordered region. Residues 656–676 (PETSTSSSQSSKSDAGASQDG) are compositionally biased toward low complexity.

The protein belongs to the FAD-dependent oxidoreductase family. FAD serves as cofactor.

It is found in the mitochondrion intermembrane space. It catalyses the reaction A + NADH + H(+) = AH2 + NAD(+). Functionally, probable NADH oxidoreductase. Mitochondrial effector of cell death that plays roles in developmentally regulated cell death and normal mitochondrial function. The chain is Putative apoptosis-inducing factor 1, mitochondrial (AIF) from Drosophila melanogaster (Fruit fly).